We begin with the raw amino-acid sequence, 311 residues long: CAAX prenyl protease 2 (311 aa).

Transmembrane regions (helical) follow at residues Val-14–Ile-34, Phe-51–Ile-71, and Val-94–Phe-114. The Proton donor/acceptor role is filled by Glu-164. A helical transmembrane segment spans residues Ile-173 to Leu-193. The active-site Proton donor/acceptor is the His-198. The next 3 membrane-spanning stretches (helical) occupy residues Ile-219–Ile-239, Leu-244–Ala-264, and Gly-268–Leu-288.

Belongs to the peptidase U48 family. As to expression, expressed in seeds, stems, leaves, flowers and siliques.

Its subcellular location is the endoplasmic reticulum membrane. The enzyme catalyses Hydrolyzes the peptide bond -P2-(S-farnesyl or geranylgeranyl)C-P1'-P2'-P3'-COOH where P1' and P2' are amino acids with aliphatic sidechains and P3' is any C-terminal residue.. Its activity is regulated as follows. Inhibited in vitro by L-1-tosylamido-2-phenylethyl chloromethyl ketone (TPCK) and N-ethylmaleimide, but not by EDTA. Protease involved in the processing of a variety of prenylated proteins containing the C-terminal CAAX motif, where C is a cysteine modified with an isoprenoid lipid, A is an aliphatic amino acid and X is any C-terminal amino acid. Proteolytically removes the C-terminal three residues of farnesylated and geranylated proteins, leaving the prenylated cysteine as the new C-terminus. The substrate specificity is only partially overlapping with that of FACE1. CAAX processing is likely required for subcellular targeting of prenylated proteins to the plasma membrane. In Arabidopsis thaliana (Mouse-ear cress), this protein is CAAX prenyl protease 2 (FACE2).